Here is a 237-residue protein sequence, read N- to C-terminus: MKIELTVNGLKIQAQYQNEEIENVHKPLLHMLAALQTVNPQRRTVVFLCAPPGTGKSTLTTFWEYLAQQDPELPAIQTLPMDGFHHYNSWLDAHQLRPFKGAPETFDVAKLTENLRQVVEGDCTWPQYDRQKHDPVEDALHVTAPLVIVEGNWLLLDDEKWLELASFCDFSIFIHAPAQILRERLISRKIAGGLTRQVAEAFYARTDGPNVERVLMNSRQANLIVEMTEEGRYHFTS.

ATP is bound at residue 50–57 (APPGTGKS).

This is an uncharacterized protein from Escherichia coli (strain K12).